The chain runs to 1195 residues: EST/SMG-like protein 2 (1195 aa).

Composition is skewed to polar residues over residues 1 to 10 (MPETSVQNPL), 18 to 35 (TRSMFLSASQQQRPSATP), and 55 to 68 (VLNPSSKRQNSNSV). 4 disordered regions span residues 1–38 (MPETSVQNPLRLSENENTRSMFLSASQQQRPSATPSFP), 55–130 (VLNP…VGIT), 179–268 (SKSE…PASN), and 610–643 (DKKERKKSSNNDSSVTESSTGNSRNDNEDDDEIM). Composition is skewed to basic and acidic residues over residues 83-109 (RFSDIEGKNNDHTYPERTTVKESEKNP) and 197-208 (INDKDNSARDQD). 2 stretches are compositionally biased toward low complexity: residues 210 to 252 (NNSG…NNSD) and 619 to 629 (NNDSSVTESST). The region spanning 1025–1164 (TYFVFDATSW…LISDDDAMKK (140 aa)) is the PINc domain.

As to quaternary structure, transiently interacts with PEX14.

It is found in the cytoplasm. The protein localises to the nucleus. Its subcellular location is the peroxisome. Functionally, may be involved in the regulation of gene expression responses of environment-sensing pathways. This is EST/SMG-like protein 2 from Saccharomyces cerevisiae (strain ATCC 204508 / S288c) (Baker's yeast).